Reading from the N-terminus, the 509-residue chain is DNA primase DnaG (509 aa).

One can recognise a Toprim domain in the interval Asp-167–Val-253. Residues Glu-173, Asp-215, and Asp-217 each contribute to the Mg(2+) site. The interval Lys-267 to Leu-411 is disordered. 2 stretches are compositionally biased toward low complexity: residues Pro-313 to Ala-331 and Glu-383 to Ala-402.

Belongs to the archaeal DnaG primase family. As to quaternary structure, forms a ternary complex with MCM helicase and DNA. Mg(2+) serves as cofactor.

It carries out the reaction ssDNA + n NTP = ssDNA/pppN(pN)n-1 hybrid + (n-1) diphosphate.. Functionally, RNA polymerase that catalyzes the synthesis of short RNA molecules used as primers for DNA polymerase during DNA replication. This chain is DNA primase DnaG, found in Natronomonas pharaonis (strain ATCC 35678 / DSM 2160 / CIP 103997 / JCM 8858 / NBRC 14720 / NCIMB 2260 / Gabara) (Halobacterium pharaonis).